The chain runs to 248 residues: Protein LIFEGUARD 3 (248 aa).

The next 7 helical transmembrane spans lie at 42 to 62 (VYSI…TVVT), 74 to 94 (GLGL…LCPL), 105 to 125 (YLLL…TCAF), 130 to 150 (VILE…LYTF), 165 to 185 (FLFG…LFPL), 188 to 208 (VSVM…IVYD), and 222 to 242 (IWAA…LLTV).

This sequence belongs to the BI1 family.

The protein resides in the membrane. In Arabidopsis thaliana (Mouse-ear cress), this protein is Protein LIFEGUARD 3.